A 413-amino-acid polypeptide reads, in one-letter code: 1-deoxy-D-xylulose 5-phosphate reductoisomerase (413 aa).

8 residues coordinate NADPH: Thr-28, Gly-29, Ser-30, Ile-31, Gly-54, Arg-55, Asn-56, and Asn-142. Residue Lys-143 participates in 1-deoxy-D-xylulose 5-phosphate binding. Glu-144 lines the NADPH pocket. Position 168 (Asp-168) interacts with Mn(2+). 1-deoxy-D-xylulose 5-phosphate contacts are provided by Ser-169, Glu-170, Ser-194, and His-217. Position 170 (Glu-170) interacts with Mn(2+). An NADPH-binding site is contributed by Gly-223. Ser-230, Asn-235, Lys-236, and Glu-239 together coordinate 1-deoxy-D-xylulose 5-phosphate. Residue Glu-239 coordinates Mn(2+).

It belongs to the DXR family. Mg(2+) is required as a cofactor. The cofactor is Mn(2+).

It catalyses the reaction 2-C-methyl-D-erythritol 4-phosphate + NADP(+) = 1-deoxy-D-xylulose 5-phosphate + NADPH + H(+). It participates in isoprenoid biosynthesis; isopentenyl diphosphate biosynthesis via DXP pathway; isopentenyl diphosphate from 1-deoxy-D-xylulose 5-phosphate: step 1/6. Catalyzes the NADPH-dependent rearrangement and reduction of 1-deoxy-D-xylulose-5-phosphate (DXP) to 2-C-methyl-D-erythritol 4-phosphate (MEP). The polypeptide is 1-deoxy-D-xylulose 5-phosphate reductoisomerase (Thermosynechococcus vestitus (strain NIES-2133 / IAM M-273 / BP-1)).